Reading from the N-terminus, the 200-residue chain is Sec-independent protein translocase protein TatB (200 aa).

Residues 2 to 22 (LPDIGGTELLIIAAVALIVVG) traverse the membrane as a helical segment. The segment at 160-200 (KAPRKRASQKQEITVEAPKAVRAPRKRASKAGDSTASDIVS) is disordered. Positions 191-200 (GDSTASDIVS) are enriched in polar residues.

The protein belongs to the TatB family. In terms of assembly, the Tat system comprises two distinct complexes: a TatABC complex, containing multiple copies of TatA, TatB and TatC subunits, and a separate TatA complex, containing only TatA subunits. Substrates initially bind to the TatABC complex, which probably triggers association of the separate TatA complex to form the active translocon.

It is found in the cell inner membrane. In terms of biological role, part of the twin-arginine translocation (Tat) system that transports large folded proteins containing a characteristic twin-arginine motif in their signal peptide across membranes. Together with TatC, TatB is part of a receptor directly interacting with Tat signal peptides. TatB may form an oligomeric binding site that transiently accommodates folded Tat precursor proteins before their translocation. This chain is Sec-independent protein translocase protein TatB, found in Caulobacter vibrioides (strain ATCC 19089 / CIP 103742 / CB 15) (Caulobacter crescentus).